The following is a 468-amino-acid chain: Glutamate--tRNA ligase (468 aa).

Positions 12-22 (PSPTGFIHLGN) match the 'HIGH' region motif. Positions 244 to 248 (KMSKR) match the 'KMSKS' region motif. Lys-247 is an ATP binding site.

It belongs to the class-I aminoacyl-tRNA synthetase family. Glutamate--tRNA ligase type 1 subfamily. Monomer.

It localises to the cytoplasm. The enzyme catalyses tRNA(Glu) + L-glutamate + ATP = L-glutamyl-tRNA(Glu) + AMP + diphosphate. Catalyzes the attachment of glutamate to tRNA(Glu) in a two-step reaction: glutamate is first activated by ATP to form Glu-AMP and then transferred to the acceptor end of tRNA(Glu). In Polynucleobacter necessarius subsp. necessarius (strain STIR1), this protein is Glutamate--tRNA ligase.